A 391-amino-acid chain; its full sequence is Homocysteine-responsive endoplasmic reticulum-resident ubiquitin-like domain member 1 protein (391 aa).

Methionine 1 bears the N-acetylmethionine mark. Residues methionine 1–aspartate 263 are Cytoplasmic-facing. Residues valine 10 to leucine 72 enclose the Ubiquitin-like domain. The segment at lysine 100–arginine 126 is disordered. Polar residues predominate over residues asparagine 112–glycine 124. An interaction with UBQLN1 region spans residues glutamine 115–serine 200. Serine 135 is modified (phosphoserine). A helical membrane pass occupies residues tryptophan 264–tyrosine 284. Over serine 285–arginine 289 the chain is Lumenal. A helical transmembrane segment spans residues phenylalanine 290–phenylalanine 310. The Cytoplasmic segment spans residues arginine 311–asparagine 391. Positions phenylalanine 318–glycine 359 are disordered. The span at aspartate 346 to leucine 357 shows a compositional bias: basic and acidic residues.

As to quaternary structure, interacts with PSEN1 and PSEN2. Interacts with UBXN6. Interacts with UBQLN1, UBQLN2 and UBQLN4. Component of the HRD1 complex, which comprises at least SYNV1/HRD1, FAM8A1, HERPUD1/HERP, OS9, SEL1L and UBE2J1. FAM8A1 binding to SYNV1 may promote recruitment of HERPUD1 to the HRD1 complex.

It is found in the endoplasmic reticulum membrane. Component of the endoplasmic reticulum quality control (ERQC) system also called ER-associated degradation (ERAD) involved in ubiquitin-dependent degradation of misfolded endoplasmic reticulum proteins. Binds to ubiquilins and this interaction is required for efficient degradation of CD3D via the ERAD pathway. The protein is Homocysteine-responsive endoplasmic reticulum-resident ubiquitin-like domain member 1 protein (HERPUD1) of Pongo abelii (Sumatran orangutan).